The sequence spans 311 residues: Probable manganese-dependent inorganic pyrophosphatase (311 aa).

Mn(2+)-binding residues include His-9, Asp-13, Asp-15, Asp-77, His-99, and Asp-151.

This sequence belongs to the PPase class C family. In terms of assembly, homodimer. Mn(2+) is required as a cofactor.

The protein localises to the cytoplasm. It carries out the reaction diphosphate + H2O = 2 phosphate + H(+). The chain is Probable manganese-dependent inorganic pyrophosphatase (ppaC) from Streptococcus gordonii (strain Challis / ATCC 35105 / BCRC 15272 / CH1 / DL1 / V288).